A 294-amino-acid chain; its full sequence is Bifunctional protein FolD (294 aa).

Residues 176-178, Ser-201, and Ile-242 each bind NADP(+); that span reads GAS.

This sequence belongs to the tetrahydrofolate dehydrogenase/cyclohydrolase family. As to quaternary structure, homodimer.

It carries out the reaction (6R)-5,10-methylene-5,6,7,8-tetrahydrofolate + NADP(+) = (6R)-5,10-methenyltetrahydrofolate + NADPH. The catalysed reaction is (6R)-5,10-methenyltetrahydrofolate + H2O = (6R)-10-formyltetrahydrofolate + H(+). It participates in one-carbon metabolism; tetrahydrofolate interconversion. Catalyzes the oxidation of 5,10-methylenetetrahydrofolate to 5,10-methenyltetrahydrofolate and then the hydrolysis of 5,10-methenyltetrahydrofolate to 10-formyltetrahydrofolate. This chain is Bifunctional protein FolD, found in Bordetella petrii (strain ATCC BAA-461 / DSM 12804 / CCUG 43448).